Consider the following 298-residue polypeptide: MEPQAEERTLGEPAPPPSGALASPTPDEEERTEGGAPPTATPAGASGDSTSADGLWGLPVEHAERRPECGRCSRPQKVCLCPYLPVRPLQISTHLYIIQHPAEESRVLRTVPLLAACLPPDRCTVKIGRRFSEERDVELATVCRDSGTLILYPGAEATNLEEFILDSPVYPSTIILIDGTWSQAKDIFYKNSLFRLPKQVQLKTSVCSQYVIRMQPTNRCLSTLECAAVALSILEKNNCIQETLLRPLQALCSFQLQHGAQIRLSKEYLLRNGLYPKPMPKNKRKLRKMELLMNSVKI.

An N-acetylmethionine modification is found at M1. Over residues 1–10 (MEPQAEERTL) the composition is skewed to basic and acidic residues. Residues 1-55 (MEPQAEERTLGEPAPPPSGALASPTPDEEERTEGGAPPTATPAGASGDSTSADGL) are disordered. A compositionally biased stretch (low complexity) spans 34 to 45 (GGAPPTATPAGA). At S132 the chain carries Phosphoserine. The DXTW motif lies at 178-181 (DGTW).

The protein belongs to the TDD superfamily. DTWD2 family.

Its subcellular location is the nucleus. It localises to the cytoplasm. The enzyme catalyses a uridine in tRNA + S-adenosyl-L-methionine = a 3-[(3S)-3-amino-3-carboxypropyl]uridine in tRNA + S-methyl-5'-thioadenosine + H(+). In terms of biological role, catalyzes the formation of 3-(3-amino-3-carboxypropyl)uridine (acp3U) at position 20a in the D-loop of several cytoplasmic tRNAs (acp3U(20a)). Also has a weak activity to form acp3U at position 20 in the D-loop of tRNAs (acp3U(20)). Involved in glycoRNA biosynthesis by mediating formation of acp3U, which acts as an attachment site for N-glycans on tRNAs. GlycoRNAs consist of RNAs modified with secretory N-glycans that are presented on the cell surface. This Mus musculus (Mouse) protein is tRNA-uridine aminocarboxypropyltransferase 2.